A 297-amino-acid polypeptide reads, in one-letter code: Chelated iron transport system membrane protein YfeD (297 aa).

8 helical membrane-spanning segments follow: residues 20–40 (AIVA…YLVL), 58–78 (IVLA…SGIF), 96–116 (TVMG…FSRI), 133–153 (ISLT…LVVL), 172–192 (IGLP…LTIV), 197–217 (AVGV…AFMI), 224–244 (MLVV…LISF), and 248–268 (GATG…ALIY).

The protein belongs to the ABC-3 integral membrane protein family.

It is found in the cell inner membrane. Part of an ATP-driven transport system YfeABCD for chelated iron. The polypeptide is Chelated iron transport system membrane protein YfeD (yfeD) (Yersinia pestis).